Here is a 232-residue protein sequence, read N- to C-terminus: Ubiquinone biosynthesis O-methyltransferase (232 aa).

S-adenosyl-L-methionine is bound by residues arginine 36, glycine 55, aspartate 76, and methionine 120.

The protein belongs to the methyltransferase superfamily. UbiG/COQ3 family.

It catalyses the reaction a 3-demethylubiquinol + S-adenosyl-L-methionine = a ubiquinol + S-adenosyl-L-homocysteine + H(+). The enzyme catalyses a 3-(all-trans-polyprenyl)benzene-1,2-diol + S-adenosyl-L-methionine = a 2-methoxy-6-(all-trans-polyprenyl)phenol + S-adenosyl-L-homocysteine + H(+). The protein operates within cofactor biosynthesis; ubiquinone biosynthesis. Functionally, O-methyltransferase that catalyzes the 2 O-methylation steps in the ubiquinone biosynthetic pathway. This is Ubiquinone biosynthesis O-methyltransferase from Burkholderia ambifaria (strain MC40-6).